The sequence spans 127 residues: Small ribosomal subunit protein uS17m (127 aa).

Belongs to the universal ribosomal protein uS17 family.

The protein resides in the mitochondrion. This Dictyostelium discoideum (Social amoeba) protein is Small ribosomal subunit protein uS17m (mrps17).